An 808-amino-acid polypeptide reads, in one-letter code: Enhancer of polycomb homolog 2 (808 aa).

Residues Lys135, Lys195, and Lys324 each participate in a glycyl lysine isopeptide (Lys-Gly) (interchain with G-Cter in SUMO2) cross-link. The disordered stretch occupies residues 337 to 357 (YPKKPKAEAGIAPQQPTPETL). Residue Lys362 forms a Glycyl lysine isopeptide (Lys-Gly) (interchain with G-Cter in SUMO2) linkage. Disordered regions lie at residues 371–397 (QSSDEDEFPQVLSPASEAEEENDPDGS), 595–630 (QRQQLAQLHQKQQSQHSSQQTHPKAQGSSTSDCMSK), and 645–682 (VSAPVPSRSEGSKEQNTGHNNMNGVVQPSGPSKTLYST). Residues 595–614 (QRQQLAQLHQKQQSQHSSQQ) show a composition bias toward low complexity. 2 stretches are compositionally biased toward polar residues: residues 615–630 (THPKAQGSSTSDCMSK) and 658–682 (EQNTGHNNMNGVVQPSGPSKTLYST). Residue Ser755 is modified to Phosphoserine.

Belongs to the enhancer of polycomb family.

The protein resides in the nucleus. May play a role in transcription or DNA repair. This Mus musculus (Mouse) protein is Enhancer of polycomb homolog 2 (Epc2).